Consider the following 134-residue polypeptide: MAQGRRVERVAALIRKETSELLINGIRDERVHQGMVSITNVEVSGDLQHCKIFVSIFGDEASQLQVMEGLQAASGYLKGELGRRLQMRRAPDVVFQLDRGIERGTSVLGLLNKLEDERKERGEIPAGSDELPAE.

This sequence belongs to the RbfA family. As to quaternary structure, monomer. Binds 30S ribosomal subunits, but not 50S ribosomal subunits or 70S ribosomes.

The protein resides in the cytoplasm. Its function is as follows. One of several proteins that assist in the late maturation steps of the functional core of the 30S ribosomal subunit. Associates with free 30S ribosomal subunits (but not with 30S subunits that are part of 70S ribosomes or polysomes). Required for efficient processing of 16S rRNA. May interact with the 5'-terminal helix region of 16S rRNA. The protein is Ribosome-binding factor A of Parasynechococcus marenigrum (strain WH8102).